Consider the following 150-residue polypeptide: Deoxyuridine 5'-triphosphate nucleotidohydrolase (150 aa).

Substrate is bound by residues 67-69 (RSS), N80, and 84-86 (VID).

It belongs to the dUTPase family. It depends on Mg(2+) as a cofactor.

It carries out the reaction dUTP + H2O = dUMP + diphosphate + H(+). It participates in pyrimidine metabolism; dUMP biosynthesis; dUMP from dCTP (dUTP route): step 2/2. Functionally, this enzyme is involved in nucleotide metabolism: it produces dUMP, the immediate precursor of thymidine nucleotides and it decreases the intracellular concentration of dUTP so that uracil cannot be incorporated into DNA. This is Deoxyuridine 5'-triphosphate nucleotidohydrolase (dut) from Lactococcus lactis subsp. lactis (strain IL1403) (Streptococcus lactis).